The following is a 416-amino-acid chain: tRNA (guanine-N(7)-)-methyltransferase non-catalytic subunit wuho (416 aa).

Residues 47-88 are disordered; it reads TQSQESCPATATSTTAGKEPGGKEQQLAKQPEEGGTSASGSV. The segment covering 49–62 has biased composition (polar residues); the sequence is SQESCPATATSTTA. 4 WD repeats span residues 89 to 130, 177 to 216, 220 to 258, and 317 to 357; these read ATST…ARLL, GHLS…DIHS, GHRE…ELLQ, and AGSW…PTTN.

The protein belongs to the WD repeat TRM82 family. As to quaternary structure, forms a heterodimer with the catalytic subunit Mettl1. Interacts with mei-P26 and weakly interacts with bgcn; required for the function or formation of the mei-P26-bgcn-bam-sxl complex. Interacts with nanos; may be involved in mei-P26-dependent derepression of the BMP signaling pathway. Interacts with Myc; the interaction may be mediated by mei-P26 and may be involved in the regulation of ribosome biogenesis. In testis, it is present at high level in hub cells, a niche for germline stem cells of testis. Ubiquitously expressed in all testicular cells throughout spermatogenesis. Ubiquitously expressed in all germline and somatic cells of the ovary.

The protein resides in the nucleus. It is found in the cytoplasm. Its pathway is tRNA modification; N(7)-methylguanine-tRNA biosynthesis. Its function is as follows. Required for the Mettl1-dependent formation of N(7)-methylguanine at position 46 (m7G46) in tRNA. In the Mettl1-wuho methyltransferase complex, it is required to stabilize and induce conformational changes of the catalytic subunit. Required for binding of nanos mRNA and repression of translation by the mei-P26-bgcn-bam-sxl complex. May cooperate with mei-P26 and nanos to derepress the BMP signaling pathway. May cooperate with mei-P26 to suppress expression of a subset of microRNAs. May cooperate with mei-P26 to regulate bam expression levels in germline cells during gametogenesis. Required to promote mitosis to meiosis transition during gametogenesis. May regulate germline cell division in part by regulating ribosome biogenesis. The sequence is that of tRNA (guanine-N(7)-)-methyltransferase non-catalytic subunit wuho from Drosophila erecta (Fruit fly).